The chain runs to 148 residues: Large ribosomal subunit protein uL15 (148 aa).

The tract at residues M1 to F50 is disordered. Positions R21–S31 are enriched in gly residues.

It belongs to the universal ribosomal protein uL15 family. As to quaternary structure, part of the 50S ribosomal subunit.

Binds to the 23S rRNA. The polypeptide is Large ribosomal subunit protein uL15 (Bacteroides fragilis (strain ATCC 25285 / DSM 2151 / CCUG 4856 / JCM 11019 / LMG 10263 / NCTC 9343 / Onslow / VPI 2553 / EN-2)).